The chain runs to 434 residues: D-amino acid dehydrogenase (434 aa).

3–17 provides a ligand contact to FAD; the sequence is VVILGSGVVGVTSAW.

This sequence belongs to the DadA oxidoreductase family. Requires FAD as cofactor.

It catalyses the reaction a D-alpha-amino acid + A + H2O = a 2-oxocarboxylate + AH2 + NH4(+). Its pathway is amino-acid degradation; D-alanine degradation; NH(3) and pyruvate from D-alanine: step 1/1. Functionally, oxidative deamination of D-amino acids. The polypeptide is D-amino acid dehydrogenase (Yersinia pseudotuberculosis serotype O:1b (strain IP 31758)).